Here is a 444-residue protein sequence, read N- to C-terminus: UDP-N-acetylmuramate--L-alanine ligase (444 aa).

Position 110 to 116 (110 to 116 (GAHGKTS)) interacts with ATP.

The protein belongs to the MurCDEF family.

It localises to the cytoplasm. It carries out the reaction UDP-N-acetyl-alpha-D-muramate + L-alanine + ATP = UDP-N-acetyl-alpha-D-muramoyl-L-alanine + ADP + phosphate + H(+). It participates in cell wall biogenesis; peptidoglycan biosynthesis. Cell wall formation. The polypeptide is UDP-N-acetylmuramate--L-alanine ligase (Streptococcus pneumoniae (strain ATCC 700669 / Spain 23F-1)).